Reading from the N-terminus, the 431-residue chain is Adenylosuccinate synthetase (431 aa).

GTP-binding positions include 15-21 and 43-45; these read GDEGKGK and GHT. D16 acts as the Proton acceptor in catalysis. Mg(2+) is bound by residues D16 and G43. IMP contacts are provided by residues 16-19, 41-44, T135, R149, N227, T242, and R306; these read DEGK and NAGH. The active-site Proton donor is the H44. A substrate-binding site is contributed by 302–308; the sequence is VTTGRKR. GTP contacts are provided by residues R308, 334–336, and 416–418; these read KLD and GVG.

This sequence belongs to the adenylosuccinate synthetase family. In terms of assembly, homodimer. It depends on Mg(2+) as a cofactor.

The protein resides in the cytoplasm. It carries out the reaction IMP + L-aspartate + GTP = N(6)-(1,2-dicarboxyethyl)-AMP + GDP + phosphate + 2 H(+). It participates in purine metabolism; AMP biosynthesis via de novo pathway; AMP from IMP: step 1/2. In terms of biological role, plays an important role in the de novo pathway and in the salvage pathway of purine nucleotide biosynthesis. Catalyzes the first committed step in the biosynthesis of AMP from IMP. The polypeptide is Adenylosuccinate synthetase (Monosiga brevicollis (Choanoflagellate)).